Consider the following 662-residue polypeptide: DNA ligase (662 aa).

NAD(+) contacts are provided by residues 31–35, 80–81, and Glu-109; these read DYEYD and SL. Residue Lys-111 is the N6-AMP-lysine intermediate of the active site. Residues Arg-132, Glu-166, Lys-282, and Lys-306 each contribute to the NAD(+) site. Zn(2+)-binding residues include Cys-400, Cys-403, Cys-418, and Cys-423. Residues 581–662 enclose the BRCT domain; sequence KVNNIFEGKT…FEEMLKGENI (82 aa).

Belongs to the NAD-dependent DNA ligase family. LigA subfamily. Requires Mg(2+) as cofactor. Mn(2+) serves as cofactor.

It carries out the reaction NAD(+) + (deoxyribonucleotide)n-3'-hydroxyl + 5'-phospho-(deoxyribonucleotide)m = (deoxyribonucleotide)n+m + AMP + beta-nicotinamide D-nucleotide.. Functionally, DNA ligase that catalyzes the formation of phosphodiester linkages between 5'-phosphoryl and 3'-hydroxyl groups in double-stranded DNA using NAD as a coenzyme and as the energy source for the reaction. It is essential for DNA replication and repair of damaged DNA. The polypeptide is DNA ligase (Thermoanaerobacter pseudethanolicus (strain ATCC 33223 / 39E) (Clostridium thermohydrosulfuricum)).